The following is a 381-amino-acid chain: Queuine tRNA-ribosyltransferase (381 aa).

The active-site Proton acceptor is the Asp92. Residues 92-96 (DSGGF), Asp146, Gln190, and Gly217 each bind substrate. The interval 248–254 (GVGRPED) is RNA binding. Asp267 acts as the Nucleophile in catalysis. An RNA binding; important for wobble base 34 recognition region spans residues 272 to 276 (TRNAR). Zn(2+) is bound by residues Cys305, Cys307, Cys310, and His337.

The protein belongs to the queuine tRNA-ribosyltransferase family. In terms of assembly, homodimer. Within each dimer, one monomer is responsible for RNA recognition and catalysis, while the other monomer binds to the replacement base PreQ1. Requires Zn(2+) as cofactor.

It carries out the reaction 7-aminomethyl-7-carbaguanine + guanosine(34) in tRNA = 7-aminomethyl-7-carbaguanosine(34) in tRNA + guanine. It functions in the pathway tRNA modification; tRNA-queuosine biosynthesis. In terms of biological role, catalyzes the base-exchange of a guanine (G) residue with the queuine precursor 7-aminomethyl-7-deazaguanine (PreQ1) at position 34 (anticodon wobble position) in tRNAs with GU(N) anticodons (tRNA-Asp, -Asn, -His and -Tyr). Catalysis occurs through a double-displacement mechanism. The nucleophile active site attacks the C1' of nucleotide 34 to detach the guanine base from the RNA, forming a covalent enzyme-RNA intermediate. The proton acceptor active site deprotonates the incoming PreQ1, allowing a nucleophilic attack on the C1' of the ribose to form the product. After dissociation, two additional enzymatic reactions on the tRNA convert PreQ1 to queuine (Q), resulting in the hypermodified nucleoside queuosine (7-(((4,5-cis-dihydroxy-2-cyclopenten-1-yl)amino)methyl)-7-deazaguanosine). In Xanthomonas campestris pv. campestris (strain B100), this protein is Queuine tRNA-ribosyltransferase.